We begin with the raw amino-acid sequence, 214 residues long: ATP phosphoribosyltransferase (214 aa).

Belongs to the ATP phosphoribosyltransferase family. Short subfamily. Heteromultimer composed of HisG and HisZ subunits.

The protein resides in the cytoplasm. The catalysed reaction is 1-(5-phospho-beta-D-ribosyl)-ATP + diphosphate = 5-phospho-alpha-D-ribose 1-diphosphate + ATP. It functions in the pathway amino-acid biosynthesis; L-histidine biosynthesis; L-histidine from 5-phospho-alpha-D-ribose 1-diphosphate: step 1/9. In terms of biological role, catalyzes the condensation of ATP and 5-phosphoribose 1-diphosphate to form N'-(5'-phosphoribosyl)-ATP (PR-ATP). Has a crucial role in the pathway because the rate of histidine biosynthesis seems to be controlled primarily by regulation of HisG enzymatic activity. The protein is ATP phosphoribosyltransferase of Marinobacter nauticus (strain ATCC 700491 / DSM 11845 / VT8) (Marinobacter aquaeolei).